A 173-amino-acid polypeptide reads, in one-letter code: Large ribosomal subunit protein bL17 (173 aa).

Residues 136–173 form a disordered region; the sequence is AEEEAPAVEAEATEATEAPVEEAAAVEAEAPADAEKAE. Residues 138–149 are compositionally biased toward acidic residues; it reads EEAPAVEAEATE. The span at 150 to 166 shows a compositional bias: low complexity; the sequence is ATEAPVEEAAAVEAEAP.

The protein belongs to the bacterial ribosomal protein bL17 family. In terms of assembly, part of the 50S ribosomal subunit. Contacts protein L32.

This chain is Large ribosomal subunit protein bL17, found in Bifidobacterium longum subsp. infantis (strain ATCC 15697 / DSM 20088 / JCM 1222 / NCTC 11817 / S12).